A 169-amino-acid polypeptide reads, in one-letter code: 16S rRNA aminocarboxypropyltransferase (169 aa).

The S-adenosyl-L-methionine site is built by threonine 17, leucine 67, leucine 90, and threonine 109.

Belongs to the TDD superfamily. TSR3 family.

The protein resides in the cytoplasm. It catalyses the reaction an N(1)-methylpseudouridine in rRNA + S-adenosyl-L-methionine = N(1)-methyl-N(3)-[(3S)-3-amino-3-carboxypropyl]pseudouridine in rRNA + S-methyl-5'-thioadenosine + H(+). In terms of biological role, aminocarboxypropyltransferase that catalyzes the aminocarboxypropyl transfer on pseudouridine corresponding to position 914 in M.jannaschii 16S rRNA. It constitutes the last step in biosynthesis of the hypermodified N1-methyl-N3-(3-amino-3-carboxypropyl) pseudouridine (m1acp3-Psi). In Methanothermobacter thermautotrophicus (strain ATCC 29096 / DSM 1053 / JCM 10044 / NBRC 100330 / Delta H) (Methanobacterium thermoautotrophicum), this protein is 16S rRNA aminocarboxypropyltransferase.